A 190-amino-acid chain; its full sequence is Nodulation protein L (190 aa).

It belongs to the transferase hexapeptide repeat family.

Functionally, acetyltransferase implicated in the O-acetylation of Nod factors. This Rhizobium leguminosarum bv. viciae protein is Nodulation protein L (nodL).